A 250-amino-acid polypeptide reads, in one-letter code: Probable E3 ubiquitin-protein ligase RHY1A (250 aa).

The segment covering 1–10 has biased composition (polar residues); sequence MTSASELFST. Residues 1–106 are disordered; sequence MTSASELFST…ETQSSSFVNL (106 aa). Basic residues predominate over residues 29–47; that stretch reads YRHHSHHHHRRHGVHHHNQ. Positions 48 to 58 are enriched in basic and acidic residues; it reads RHDSDGCDPLR. Residues 60 to 69 are compositionally biased toward basic residues; it reads PTPRLRRFFH. The segment covering 71-80 has biased composition (basic and acidic residues); it reads PIQERSRPIR. Residues 91-102 are compositionally biased toward low complexity; sequence TDSTDTETQSSS. Residues 203-244 form an RING-type; atypical zinc finger; it reads CSICLESFTKGDMLISLPCTHSFHSSCLNPWLRACGDCPCCR.

It catalyses the reaction S-ubiquitinyl-[E2 ubiquitin-conjugating enzyme]-L-cysteine + [acceptor protein]-L-lysine = [E2 ubiquitin-conjugating enzyme]-L-cysteine + N(6)-ubiquitinyl-[acceptor protein]-L-lysine.. It participates in protein modification; protein ubiquitination. Functionally, probable E3 ubiquitin-protein ligase that may possess E3 ubiquitin ligase activity in vitro. In Arabidopsis thaliana (Mouse-ear cress), this protein is Probable E3 ubiquitin-protein ligase RHY1A.